We begin with the raw amino-acid sequence, 62 residues long: Large ribosomal subunit protein bL28 (62 aa).

The protein belongs to the bacterial ribosomal protein bL28 family.

The protein is Large ribosomal subunit protein bL28 of Helicobacter hepaticus (strain ATCC 51449 / 3B1).